We begin with the raw amino-acid sequence, 368 residues long: Chorismate synthase (368 aa).

Positions 48 and 54 each coordinate NADP(+). FMN is bound by residues 131–133 (RSS), 243–244 (NA), Gly-292, 307–311 (KPTSS), and Arg-333.

The protein belongs to the chorismate synthase family. Homotetramer. FMNH2 is required as a cofactor.

The catalysed reaction is 5-O-(1-carboxyvinyl)-3-phosphoshikimate = chorismate + phosphate. The protein operates within metabolic intermediate biosynthesis; chorismate biosynthesis; chorismate from D-erythrose 4-phosphate and phosphoenolpyruvate: step 7/7. Functionally, catalyzes the anti-1,4-elimination of the C-3 phosphate and the C-6 proR hydrogen from 5-enolpyruvylshikimate-3-phosphate (EPSP) to yield chorismate, which is the branch point compound that serves as the starting substrate for the three terminal pathways of aromatic amino acid biosynthesis. This reaction introduces a second double bond into the aromatic ring system. This is Chorismate synthase from Nitrobacter winogradskyi (strain ATCC 25391 / DSM 10237 / CIP 104748 / NCIMB 11846 / Nb-255).